A 629-amino-acid chain; its full sequence is DNA mismatch repair protein MutL (629 aa).

It belongs to the DNA mismatch repair MutL/HexB family.

In terms of biological role, this protein is involved in the repair of mismatches in DNA. It is required for dam-dependent methyl-directed DNA mismatch repair. May act as a 'molecular matchmaker', a protein that promotes the formation of a stable complex between two or more DNA-binding proteins in an ATP-dependent manner without itself being part of a final effector complex. This is DNA mismatch repair protein MutL from Haemophilus influenzae (strain PittGG).